Reading from the N-terminus, the 203-residue chain is Ras-related protein Rab-24 (203 aa).

Tyrosine 17 carries the post-translational modification Phosphotyrosine. 4 residues coordinate GTP: glycine 19, lysine 20, threonine 21, and threonine 40. Threonine 21, threonine 40, and aspartate 63 together coordinate Mg(2+). The tract at residues 30–45 (DRFLVGPYQNTIGAAF) is switch I. Residues 63-80 (DTAGSERYEAMSRIYYRG) form a switch II region. GTP contacts are provided by glycine 66, lysine 121, aspartate 123, and lysine 156. The residue at position 172 (tyrosine 172) is a Phosphotyrosine. Residues cysteine 200 and cysteine 201 are each lipidated (S-geranylgeranyl cysteine).

Belongs to the small GTPase superfamily. Rab family. As to quaternary structure, interacts with ZFYVE20. Does not interact with the GDP dissociation inhibitors ARHGDIA and ARHGDIB. Requires Mg(2+) as cofactor. Post-translationally, prenylated; prenylation is required for RAB24 localization to autophagosomes. Isoprenylation is inefficient compared to other Rab family members. Phosphorylated at Tyr-17 and Tyr-172. Cytosolic pool of RAB24 is more phosphorylated than the membrane-associated pool. In terms of tissue distribution, widely expressed, with highest expression in brain.

The protein resides in the cytoplasm. It localises to the cytosol. It is found in the membrane. The protein localises to the cytoplasmic vesicle. Its subcellular location is the autophagosome membrane. The protein resides in the perinuclear region. It localises to the cytoskeleton. It is found in the spindle. The catalysed reaction is GTP + H2O = GDP + phosphate + H(+). With respect to regulation, regulated by guanine nucleotide exchange factors (GEFs) which promote the exchange of bound GDP for free GTP. Regulated by GTPase activating proteins (GAPs) which increase the GTP hydrolysis activity. Inhibited by GDP dissociation inhibitors (GDIs). In terms of biological role, the small GTPases Rab are key regulators of intracellular membrane trafficking, from the formation of transport vesicles to their fusion with membranes. Rabs cycle between an inactive GDP-bound form and an active GTP-bound form that is able to recruit to membranes different sets of downstream effectors directly responsible for vesicle formation, movement, tethering and fusion. RAB24 is an atypical RAB protein that presents low GTPase activity and thereby exists predominantly in the GTP-bound active state. RAB24 is required for the clearance of late autophagic vacuoles under basal conditions. It is not needed for starvation-induced autophagy. Involved in the modulation of meiotic apparatus assembly and meiotic progression during oocyte maturation, possibly through regulation of kinetochore-microtubule interaction. This chain is Ras-related protein Rab-24, found in Mus musculus (Mouse).